Here is a 305-residue protein sequence, read N- to C-terminus: uncharacterized protein (305 aa).

It belongs to the IIV-6 436R family.

This is an uncharacterized protein from Acheta domesticus (House cricket).